The chain runs to 328 residues: DNA-directed RNA polymerase subunit alpha (328 aa).

An alpha N-terminal domain (alpha-NTD) region spans residues 1–234 (MQGSVTEFLK…EQLDAFVDLR (234 aa)). The interval 248 to 328 (FXPILLRPVD…NWPPASIAED (81 aa)) is alpha C-terminal domain (alpha-CTD).

It belongs to the RNA polymerase alpha chain family. As to quaternary structure, homodimer. The RNAP catalytic core consists of 2 alpha, 1 beta, 1 beta' and 1 omega subunit. When a sigma factor is associated with the core the holoenzyme is formed, which can initiate transcription.

The enzyme catalyses RNA(n) + a ribonucleoside 5'-triphosphate = RNA(n+1) + diphosphate. Functionally, DNA-dependent RNA polymerase catalyzes the transcription of DNA into RNA using the four ribonucleoside triphosphates as substrates. This is DNA-directed RNA polymerase subunit alpha from Haemophilus influenzae (strain ATCC 51907 / DSM 11121 / KW20 / Rd).